Consider the following 139-residue polypeptide: uncharacterized protein (139 aa).

Residues 5–114 (IFCKIINKEL…IPRFKNDGFG (110 aa)) enclose the HIT domain. The Histidine triad motif motif lies at 99 to 103 (HTHFH).

This is an uncharacterized protein from Borreliella burgdorferi (strain ATCC 35210 / DSM 4680 / CIP 102532 / B31) (Borrelia burgdorferi).